A 205-amino-acid chain; its full sequence is LexA repressor (205 aa).

Positions 28–48 form a DNA-binding region, H-T-H motif; it reads IRDIMKHFNFKSPRAAHKHLI. Active-site for autocatalytic cleavage activity residues include Ser125 and Lys163.

Belongs to the peptidase S24 family. In terms of assembly, homodimer.

The catalysed reaction is Hydrolysis of Ala-|-Gly bond in repressor LexA.. Its function is as follows. Represses a number of genes involved in the response to DNA damage (SOS response), including recA and lexA. In the presence of single-stranded DNA, RecA interacts with LexA causing an autocatalytic cleavage which disrupts the DNA-binding part of LexA, leading to derepression of the SOS regulon and eventually DNA repair. The polypeptide is LexA repressor (Petrotoga mobilis (strain DSM 10674 / SJ95)).